The following is an 887-amino-acid chain: 3-hydroxy-3-methylglutaryl-coenzyme A reductase (887 aa).

Residues 1–9 are Cytoplasmic-facing; that stretch reads MLSRLFRMH. A helical membrane pass occupies residues 10–39; sequence GLFVASHPWEVIVGTVTLTICMMSMNMFTG. At 40–56 the chain is on the lumenal side; the sequence is NNKICGWNYECPKFEED. Residues 57–78 form a helical membrane-spanning segment; that stretch reads VLSSDIIILTITRCIAILYIYF. The SSD domain occupies 61 to 218; it reads DIIILTITRC…MTFFPACVSL (158 aa). Positions 75-78 match the INSIG-binding motif motif; sequence YIYF. The Cytoplasmic portion of the chain corresponds to 79 to 89; the sequence is QFQNLRQLGSK. Residue Lys-89 forms a Glycyl lysine isopeptide (Lys-Gly) (interchain with G-Cter in ubiquitin) linkage. The chain crosses the membrane as a helical span at residues 90–114; sequence YILGIAGLFTIFSSFVFSTVVIHFL. The Lumenal portion of the chain corresponds to 115–123; sequence DKELTGLNE. A helical membrane pass occupies residues 124 to 149; the sequence is ALPFFLLLIDLSRASALAKFALSSNS. Residues 150–159 are Cytoplasmic-facing; the sequence is QDEVRENIAR. The chain crosses the membrane as a helical span at residues 160-187; it reads GMAILGPTFTLDALVECLVIGVGTMSGV. Topologically, residues 188 to 191 are lumenal; sequence RQLE. Residues 192–220 traverse the membrane as a helical segment; the sequence is IMCCFGCMSVLANYFVFMTFFPACVSLVL. The Cytoplasmic portion of the chain corresponds to 221–248; it reads ELSRESREGRPIWQLSHFARVLEEEENK. Residue Lys-248 forms a Glycyl lysine isopeptide (Lys-Gly) (interchain with G-Cter in ubiquitin) linkage. The helical transmembrane segment at 249-275 threads the bilayer; it reads PNPVTQRVKMIMSLGLVLVHAHSRWIA. Over 276–314 the chain is Lumenal; it reads DPSPQNSTTEHSKVSLGLDEDVSKRIEPSVSLWQFYLSK. Asn-281 carries N-linked (GlcNAc...) asparagine glycosylation. Residues 315–339 form a helical membrane-spanning segment; it reads MISMDIEQVVTLSLAFLLAVKYIFF. Residues 340 to 887 are Cytoplasmic-facing; the sequence is EQAETESTLS…LQGTCTKKAA (548 aa). Catalysis depends on charge relay system residues Glu-558, Lys-690, and Asp-766. The active-site Proton donor is His-865. Position 871 is a phosphoserine; by AMPK (Ser-871).

The protein belongs to the HMG-CoA reductase family. In terms of assembly, homotetramer. Homodimer. Interacts (via its SSD) with INSIG1; the interaction, accelerated by sterols, leads to the recruitment of HMGCR to AMFR/gp78 for its ubiquitination by the sterol-mediated ERAD pathway. Interacts with UBIAD1. In terms of processing, undergoes sterol-mediated ubiquitination and ER-associated degradation (ERAD). Accumulation of sterols in the endoplasmic reticulum (ER) membrane, triggers binding of the reductase to the ER membrane protein INSIG1 or INSIG2. The INSIG1 binding leads to the recruitment of the ubiquitin ligase, AMFR/gp78, RNF139 or RNF145, initiating ubiquitination of the reductase. The ubiquitinated reductase is then extracted from the ER membrane and delivered to cytosolic 26S proteosomes by a mechanism probably mediated by the ATPase Valosin-containing protein VCP/p97. The INSIG2-binding leads to the recruitment of the ubiquitin ligase RNF139, initiating ubiquitination of the reductase. Lys-248 is the main site of ubiquitination. Ubiquitination is enhanced by the presence of a geranylgeranylated protein. N-glycosylated. Deglycosylated by NGLY1 on release from the endoplasmic reticulum (ER) in a sterol-mediated manner. Post-translationally, phosphorylated. Phosphorylation at Ser-871 reduces the catalytic activity.

It localises to the endoplasmic reticulum membrane. The protein localises to the peroxisome membrane. The catalysed reaction is (R)-mevalonate + 2 NADP(+) + CoA = (3S)-3-hydroxy-3-methylglutaryl-CoA + 2 NADPH + 2 H(+). The protein operates within metabolic intermediate biosynthesis; (R)-mevalonate biosynthesis; (R)-mevalonate from acetyl-CoA: step 3/3. Regulated by a negative feedback mechanism through sterols and non-sterol metabolites derived from mevalonate. Phosphorylation at Ser-871 down-regulates the catalytic activity. In terms of biological role, catalyzes the conversion of (3S)-hydroxy-3-methylglutaryl-CoA (HMG-CoA) to mevalonic acid, the rate-limiting step in the synthesis of cholesterol and other isoprenoids, thus plays a critical role in cellular cholesterol homeostasis. In Mesocricetus auratus (Golden hamster), this protein is 3-hydroxy-3-methylglutaryl-coenzyme A reductase (HMGCR).